We begin with the raw amino-acid sequence, 367 residues long: Glycolate oxidase 3 (367 aa).

An FMN hydroxy acid dehydrogenase domain is found at 1-360 (MELITNVSEY…TRNHVITDSD (360 aa)). Tyrosine 25 is a binding site for glyoxylate. Residues 78–80 (PSA), serine 107, 128–130 (QLY), and threonine 156 each bind FMN. Tyrosine 130 is a glyoxylate binding site. Arginine 165 provides a ligand contact to glyoxylate. Residues lysine 231 and serine 253 each coordinate FMN. Glyoxylate-binding residues include histidine 255 and arginine 258. Residue histidine 255 is the Proton acceptor of the active site. Residues 286 to 290 (DGGVR) and 309 to 310 (GR) each bind FMN. A Microbody targeting signal motif is present at residues 365–367 (SRL).

The protein belongs to the FMN-dependent alpha-hydroxy acid dehydrogenase family. In terms of assembly, homotetramer. The cofactor is FMN.

It is found in the peroxisome. It carries out the reaction glycolate + O2 = glyoxylate + H2O2. The protein operates within photosynthesis; photorespiration; glycine from 2-phosphoglycolate: step 2/3. Its function is as follows. Catalyzes the oxidation of glycolate to glyoxylate, with a reduction of O2 to H2O2. Is a key enzyme in photorespiration in green plants. The polypeptide is Glycolate oxidase 3 (GLO3) (Oryza sativa subsp. indica (Rice)).